A 364-amino-acid chain; its full sequence is Aminomethyltransferase (364 aa).

This sequence belongs to the GcvT family. In terms of assembly, the glycine cleavage system is composed of four proteins: P, T, L and H.

The catalysed reaction is N(6)-[(R)-S(8)-aminomethyldihydrolipoyl]-L-lysyl-[protein] + (6S)-5,6,7,8-tetrahydrofolate = N(6)-[(R)-dihydrolipoyl]-L-lysyl-[protein] + (6R)-5,10-methylene-5,6,7,8-tetrahydrofolate + NH4(+). The glycine cleavage system catalyzes the degradation of glycine. The chain is Aminomethyltransferase from Salmonella enteritidis PT4 (strain P125109).